Reading from the N-terminus, the 2760-residue chain is A-kinase anchor protein 13 (2760 aa).

Disordered stretches follow at residues 356–388 (CSHK…QDSC), 442–517 (PDAR…EPKQ), 530–577 (AAGA…VLPA), 604–711 (SSLD…AAHN), 729–857 (EKDL…EQEG), 890–940 (GGSI…QEIS), 954–1029 (EKAL…ASEA), and 1132–1162 (EGTD…DLPT). Residues 378–388 (DSRSASHQDSC) are compositionally biased toward polar residues. The span at 442-454 (PDARQHSSGRELP) shows a compositional bias: basic and acidic residues. An important for interaction with PRKAR2A region spans residues 482 to 504 (QNSKPQVGESAKERLENSDISSA). Low complexity predominate over residues 530–547 (AAGADAPAEASPAWSPEE). Composition is skewed to polar residues over residues 620–638 (KQNS…SQAP), 654–664 (CPQSTETSSGG), and 701–711 (DTVTSDTAAHN). A compositionally biased stretch (low complexity) spans 769-780 (SSFSLASSPESE). Serine 776 bears the Phosphoserine mark. At threonine 801 the chain carries Phosphothreonine. Residues 814–826 (PDGRDLNDTDKVG) show a composition bias toward basic and acidic residues. Over residues 839 to 849 (ELQTSMGNTSP) the composition is skewed to polar residues. The segment covering 906–931 (GKDKATKCPSVKEDVHSSEMSREDQR) has biased composition (basic and acidic residues). Threonine 932 bears the Phosphothreonine mark. 2 stretches are compositionally biased toward polar residues: residues 958 to 972 (QHSN…CLQT) and 1001 to 1020 (TSLS…SGSS). Serine 962 is subject to Phosphoserine. An important for interaction with PRKAR2A region spans residues 1213–1228 (SIEETATRIVEAVIKQ). Disordered regions lie at residues 1392 to 1411 (GVLQ…PSDE), 1425 to 1508 (LLCD…VPAN), and 1520 to 1539 (SPFR…DAEM). Low complexity predominate over residues 1428–1439 (DTTGSSSSTDDT). Residues 1449–1472 (GSDVSLPQTSKLNRSRNHQSSNGF) show a composition bias toward polar residues. Phosphoserine occurs at positions 1450, 1468, 1501, 1526, and 1585. The tract at residues 1546–1695 (QVLGHVVRRP…SRPFHSASAN (150 aa)) is important for interaction with MAP2K3. The segment at 1592–1628 (GGGVGNKPSSSLEISSANSSELRNPFSGEEQRSSLMS) is disordered. The span at 1600-1611 (SSSLEISSANSS) shows a compositional bias: low complexity. A phosphoserine mark is found at serine 1625, serine 1628, and serine 1630. N6-methyllysine is present on lysine 1654. The tract at residues 1733–1755 (RNKMSSSKKSKKEKDKKTLNGHT) is disordered. The Phorbol-ester/DAG-type zinc-finger motif lies at 1753-1800 (GHTFSPIPIVGPINCSQCMKPFTNKDAYTCASCGAFVHKGCRENLASC). Phosphoserine occurs at positions 1838, 1857, and 1891. The segment at 1881–2760 (MSNTWKFLSH…VPAEGEEIFC (880 aa)) is interaction with ESR1. Threonine 1892 is modified (phosphothreonine). A phosphoserine mark is found at serine 1894 and serine 1907. Residues 1956 to 2153 (KRQEVIYELM…KDVIGAVDSK (198 aa)) enclose the DH domain. One can recognise a PH domain in the interval 2176–2280 (MRMKSGQMFA…WIQIIQDTIN (105 aa)). Phosphoserine is present on residues serine 2292 and serine 2345. Residues 2292 to 2329 (SENEEEKRLLDTKARELKEQLQQKDQQILLLLEEKEMI) are a coiled coil. Threonine 2415 is modified (phosphothreonine). A disordered region spans residues 2422 to 2450 (HQLNASKGGEKEEGDDGQDLRRTESDSGL). The segment covering 2439–2450 (QDLRRTESDSGL) has biased composition (basic and acidic residues). 2 positions are modified to phosphoserine: serine 2511 and serine 2514. Positions 2516-2632 (LIEQEKQRSL…LSQRQMEQDL (117 aa)) form a coiled coil. Disordered regions lie at residues 2568–2588 (AERE…REEL) and 2660–2760 (TPSI…EIFC). Polar residues-rich tracts occupy residues 2660-2684 (TPSI…SISR) and 2696-2711 (SSAS…SQAP). Serine 2676 carries the phosphoserine modification. Low complexity predominate over residues 2743-2752 (PGDGPAPEVP).

Interacts with the cAMP-dependent protein kinase (PKA) holoenzyme and with the regulatory subunit PRKAR2A. Interacts with RHOA. Also interacts with RHOB and RHOC. Identified in a ternary complex with RHOA and PRKAR2A. Identified in a complex with NR3C1 and RHOA. Interacts with BRAF and KSR1. Identified in a complex with BRAF and KSR1. Component of a signaling complex containing at least AKAP13, PKN1, MAPK14, ZAK and MAP2K3. Within this complex, AKAP13 interacts directly with PKN1, which in turn recruits MAPK14, MAP2K3 and ZAK. Interacts (phosphorylated form) with YWHAB and YWHAZ. Interaction with YWHAB inhibits activation of RHOA, interferes with PKN1 binding and activation of MAP kinases. Interacts with GNA12. Interacts with IKBKB. Interacts with ESR1, THRA, PPARA and NME2. Interacts (via the C-terminal domain after the PH domain) with MEF2C and RXRB. Interacts (via the C-terminal domain after the PH domain) with PRKD1. In terms of tissue distribution, detected in bone osteoblasts (at protein level).

It localises to the cytoplasm. The protein localises to the cytosol. The protein resides in the cell cortex. Its subcellular location is the nucleus. It is found in the membrane. Scaffold protein that plays an important role in assembling signaling complexes downstream of several types of G protein-coupled receptors. Activates RHOA in response to signaling via G protein-coupled receptors via its function as Rho guanine nucleotide exchange factor. May also activate other Rho family members. Part of a kinase signaling complex that links ADRA1A and ADRA1B adrenergic receptor signaling to the activation of downstream p38 MAP kinases, such as MAPK11 and MAPK14. Part of a signaling complex that links ADRA1B signaling to the activation of RHOA and IKBKB/IKKB, leading to increased NF-kappa-B transcriptional activity. Part of a RHOA-dependent signaling cascade that mediates responses to lysophosphatidic acid (LPA), a signaling molecule that activates G-protein coupled receptors and potentiates transcriptional activation of the glucocorticoid receptor NR3C1. Part of a signaling cascade that stimulates MEF2C-dependent gene expression in response to lysophosphatidic acid (LPA). Part of a signaling pathway that activates MAPK11 and/or MAPK14 and leads to increased transcription activation of the estrogen receptors ESR1 and ESR2. Part of a signaling cascade that links cAMP and EGFR signaling to BRAF signaling and to PKA-mediated phosphorylation of KSR1, leading to the activation of downstream MAP kinases, such as MAPK1 or MAPK3. Functions as a scaffold protein that anchors cAMP-dependent protein kinase (PKA) and PRKD1. This promotes activation of PRKD1, leading to increased phosphorylation of HDAC5 and ultimately cardiomyocyte hypertrophy. Has no guanine nucleotide exchange activity on CDC42, Ras or Rac. Required for normal embryonic heart development, and in particular for normal sarcomere formation in the developing cardiomyocytes. Plays a role in cardiomyocyte growth and cardiac hypertrophy in response to activation of the beta-adrenergic receptor by phenylephrine or isoproterenol. Required for normal adaptive cardiac hypertrophy in response to pressure overload. Plays a role in osteogenesis. The protein is A-kinase anchor protein 13 of Rattus norvegicus (Rat).